We begin with the raw amino-acid sequence, 404 residues long: Cysteine desulfurase IscS (404 aa).

Pyridoxal 5'-phosphate is bound by residues 75-76 (AT), asparagine 155, glutamine 183, and 203-205 (SAH). N6-(pyridoxal phosphate)lysine is present on lysine 206. Threonine 243 contributes to the pyridoxal 5'-phosphate binding site. Cysteine 328 (cysteine persulfide intermediate) is an active-site residue. [2Fe-2S] cluster is bound at residue cysteine 328.

The protein belongs to the class-V pyridoxal-phosphate-dependent aminotransferase family. NifS/IscS subfamily. In terms of assembly, homodimer. Forms a heterotetramer with IscU, interacts with other sulfur acceptors. Pyridoxal 5'-phosphate serves as cofactor.

The protein localises to the cytoplasm. The enzyme catalyses (sulfur carrier)-H + L-cysteine = (sulfur carrier)-SH + L-alanine. It functions in the pathway cofactor biosynthesis; iron-sulfur cluster biosynthesis. Master enzyme that delivers sulfur to a number of partners involved in Fe-S cluster assembly, tRNA modification or cofactor biosynthesis. Catalyzes the removal of elemental sulfur atoms from cysteine to produce alanine. Functions as a sulfur delivery protein for Fe-S cluster synthesis onto IscU, an Fe-S scaffold assembly protein, as well as other S acceptor proteins. The chain is Cysteine desulfurase IscS from Pseudomonas aeruginosa (strain UCBPP-PA14).